The following is a 476-amino-acid chain: Probable serine carboxypeptidase CPVL (476 aa).

A signal peptide spans 1–22 (MVGTMWKVIVSLVLLMPGSCDG). 2 N-linked (GlcNAc...) asparagine glycosylation sites follow: Asn81 and Asn132. Residue Ser204 is part of the active site. 2 N-linked (GlcNAc...) asparagine glycosylation sites follow: Asn307 and Asn346. Active-site residues include Asp388 and His448.

It belongs to the peptidase S10 family.

In terms of biological role, may be involved in the digestion of phagocytosed particles in the lysosome, participation in an inflammatory protease cascade, and trimming of peptides for antigen presentation. This Pongo abelii (Sumatran orangutan) protein is Probable serine carboxypeptidase CPVL (CPVL).